A 413-amino-acid chain; its full sequence is Alpha-1-antiproteinase (413 aa).

The signal sequence occupies residues 1–24 (MTPSISWRLLLLAGLCCLVPSYLA). A Phosphoserine modification is found at serine 33. N-linked (GlcNAc...) asparagine glycosylation is found at asparagine 64, asparagine 101, and asparagine 265. The segment at 368–387 (ATTIVEAVFMSLPPILHFNH) is RCL. Serine 378 bears the Phosphoserine mark.

Belongs to the serpin family. Interacts with CELA2A. Interacts with ERGIC3 and LMAN1/ERGIC53. Interacts with PRSS1/Trypsin.

It localises to the secreted. Inhibitor of serine proteases. The primary target is elastase, but also has a moderate affinity for plasmin and thrombin. This is Alpha-1-antiproteinase (Serpina1) from Mus saxicola (Brown spiny mouse).